A 626-amino-acid chain; its full sequence is Methanol dehydrogenase [cytochrome c] subunit 1 (626 aa).

An N-terminal signal peptide occupies residues 1–27 (MSRFVTSVSALAMLALAPAALSSGAYA). An intrachain disulfide couples Cys130 to Cys131. Residues Glu204 and Asn288 each contribute to the Ca(2+) site. Residue Asp330 is the Proton acceptor of the active site. A disulfide bond links Cys413 and Cys442.

This sequence belongs to the bacterial PQQ dehydrogenase family. As to quaternary structure, heterotetramer composed of 2 alpha and 2 beta subunits. It depends on pyrroloquinoline quinone as a cofactor. The cofactor is Ca(2+).

It is found in the cell inner membrane. The enzyme catalyses 2 Fe(III)-[cytochrome cL] + a primary alcohol = 2 Fe(II)-[cytochrome cL] + an aldehyde + 2 H(+). Its function is as follows. Catalyzes the oxidation of primary alcohols including methanol. This chain is Methanol dehydrogenase [cytochrome c] subunit 1 (moxF), found in Methylorubrum extorquens (strain ATCC 14718 / DSM 1338 / JCM 2805 / NCIMB 9133 / AM1) (Methylobacterium extorquens).